Consider the following 606-residue polypeptide: Aspartate--tRNA(Asp/Asn) ligase (606 aa).

E175 provides a ligand contact to L-aspartate. Residues 199 to 202 (QLFK) are aspartate. Residue R221 participates in L-aspartate binding. ATP is bound by residues 221–223 (RDE) and Q230. Position 453 (H453) interacts with L-aspartate. E487 serves as a coordination point for ATP. R494 contacts L-aspartate. Position 539-542 (539-542 (GWDR)) interacts with ATP. A disordered region spans residues 564–606 (GGVDPLTDAPGTIPAEQRKETGVDFKPEKAAKAAQGEKAGKES). Basic and acidic residues predominate over residues 579–594 (EQRKETGVDFKPEKAA).

The protein belongs to the class-II aminoacyl-tRNA synthetase family. Type 1 subfamily. In terms of assembly, homodimer.

It is found in the cytoplasm. The enzyme catalyses tRNA(Asx) + L-aspartate + ATP = L-aspartyl-tRNA(Asx) + AMP + diphosphate. In terms of biological role, aspartyl-tRNA synthetase with relaxed tRNA specificity since it is able to aspartylate not only its cognate tRNA(Asp) but also tRNA(Asn). Reaction proceeds in two steps: L-aspartate is first activated by ATP to form Asp-AMP and then transferred to the acceptor end of tRNA(Asp/Asn). In Corynebacterium aurimucosum (strain ATCC 700975 / DSM 44827 / CIP 107346 / CN-1) (Corynebacterium nigricans), this protein is Aspartate--tRNA(Asp/Asn) ligase.